We begin with the raw amino-acid sequence, 172 residues long: Bifunctional protein PyrR (172 aa).

The PRPP-binding signature appears at 90 to 102 (LVLVDDVLMSGRT).

The protein belongs to the purine/pyrimidine phosphoribosyltransferase family. PyrR subfamily.

The enzyme catalyses UMP + diphosphate = 5-phospho-alpha-D-ribose 1-diphosphate + uracil. Its function is as follows. Regulates the transcription of the pyrimidine nucleotide (pyr) operon in response to exogenous pyrimidines. In terms of biological role, also displays a weak uracil phosphoribosyltransferase activity which is not physiologically significant. This chain is Bifunctional protein PyrR, found in Pseudomonas entomophila (strain L48).